The following is a 490-amino-acid chain: GDP-fucose protein O-fucosyltransferase 2 (490 aa).

Residues 1–25 form the signal peptide; the sequence is MRGSWPRLGFPALLLLLHLLTGSDA. 2 N-linked (GlcNAc...) asparagine glycosylation sites follow: N29 and N79. 81–85 provides a ligand contact to GDP-beta-L-fucose; that stretch reads SEGFN. E82 serves as the catalytic Proton acceptor. C203 and C226 are joined by a disulfide. 336-338 is a GDP-beta-L-fucose binding site; the sequence is HLR. N-linked (GlcNAc...) asparagine glycosylation is present at N368. GDP-beta-L-fucose is bound by residues D418 and 435-436; that span reads TF. A disulfide bridge links C459 with C466.

This sequence belongs to the glycosyltransferase 68 family.

It is found in the endoplasmic reticulum. The protein resides in the golgi apparatus. It carries out the reaction L-seryl-[protein] + GDP-beta-L-fucose = 3-O-(alpha-L-fucosyl)-L-seryl-[protein] + GDP + H(+). It catalyses the reaction L-threonyl-[protein] + GDP-beta-L-fucose = 3-O-(alpha-L-fucosyl)-L-threonyl-[protein] + GDP + H(+). It participates in protein modification; protein glycosylation. With respect to regulation, does not require divalent metal ions for optimal activity. In terms of biological role, catalyzes the reaction that attaches fucose through an O-glycosidic linkage to a conserved serine or threonine residue in the consensus sequence C1-X-X-S/T-C2 of thrombospondin type I repeats (TSRs) where C1 and C2 are the first and second cysteines of the repeat, respectively. O-fucosylates members of several protein families including the ADAMTS, the thrombospondin (TSP) and spondin families. The polypeptide is GDP-fucose protein O-fucosyltransferase 2 (Drosophila melanogaster (Fruit fly)).